We begin with the raw amino-acid sequence, 766 residues long: Serine/threonine-protein kinase DCLK2 (766 aa).

The interval 1–45 is disordered; the sequence is MASTRSIELEHFEERDKRPRPGSRRGAPSSSGGSSSSGPKGNGLI. Basic and acidic residues predominate over residues 7 to 19; the sequence is IELEHFEERDKRP. Positions 24 to 39 are enriched in low complexity; sequence RRGAPSSSGGSSSSGP. At threonine 61 the chain carries Phosphothreonine. 2 Doublecortin domains span residues 72 to 158 and 197 to 280; these read KKAR…VDYT and KLVT…AQDD. 2 stretches are compositionally biased toward low complexity: residues 300–312 and 324–347; these read AVKY…PGPS and TPSS…SPGS. The tract at residues 300-378 is disordered; sequence AVKYSGSKSP…ELDRCISPEG (79 aa). Serine 362 carries the phosphoserine modification. The Protein kinase domain occupies 394 to 651; it reads YKIGKVIGDG…AGQILSHPWV (258 aa). ATP is bound by residues 400–408 and lysine 423; that span reads IGDGNFAVV. The active-site Proton acceptor is the aspartate 515. A Phosphoserine modification is found at serine 647. Residue threonine 666 is modified to Phosphothreonine. The disordered stretch occupies residues 707-766; the sequence is CQDSGRPGMEPISPVPPSVEEIPVPGEAVPAPTPPESPTPHPPPAAPGGERAGTWRRHRD. The segment covering 724–736 has biased composition (low complexity); the sequence is SVEEIPVPGEAVP. Residues 737–752 show a composition bias toward pro residues; it reads APTPPESPTPHPPPAA.

Belongs to the protein kinase superfamily. CAMK Ser/Thr protein kinase family. CaMK subfamily. In terms of assembly, binds to and stabilizes microtubules. Interacts with MAPK8IP1/JIP-1, MAPK8IP2/JIP-2, MAPK9/JNK2, PPP1R9B/NEURABIN-2 and actin. Autophosphorylated. In terms of tissue distribution, expressed in the brain, heart and eyes.

The protein resides in the cytoplasm. Its subcellular location is the cytoskeleton. The enzyme catalyses L-seryl-[protein] + ATP = O-phospho-L-seryl-[protein] + ADP + H(+). It carries out the reaction L-threonyl-[protein] + ATP = O-phospho-L-threonyl-[protein] + ADP + H(+). Functionally, protein kinase with a significantly reduced C(a2+)/CAM affinity and dependence compared to other members of the CaMK family. May play a role in the down-regulation of CRE-dependent gene activation probably by phosphorylation of the CREB coactivator CRTC2/TORC2 and the resulting retention of TORC2 in the cytoplasm. The sequence is that of Serine/threonine-protein kinase DCLK2 (DCLK2) from Homo sapiens (Human).